Reading from the N-terminus, the 325-residue chain is tRNA U34 carboxymethyltransferase (325 aa).

Carboxy-S-adenosyl-L-methionine is bound by residues Lys91, Trp105, Lys110, Gly130, 152–154 (DPS), Met196, Tyr200, and Arg315.

Belongs to the class I-like SAM-binding methyltransferase superfamily. CmoB family. In terms of assembly, homotetramer.

It carries out the reaction carboxy-S-adenosyl-L-methionine + 5-hydroxyuridine(34) in tRNA = 5-carboxymethoxyuridine(34) in tRNA + S-adenosyl-L-homocysteine + H(+). In terms of biological role, catalyzes carboxymethyl transfer from carboxy-S-adenosyl-L-methionine (Cx-SAM) to 5-hydroxyuridine (ho5U) to form 5-carboxymethoxyuridine (cmo5U) at position 34 in tRNAs. The polypeptide is tRNA U34 carboxymethyltransferase (Aeromonas hydrophila subsp. hydrophila (strain ATCC 7966 / DSM 30187 / BCRC 13018 / CCUG 14551 / JCM 1027 / KCTC 2358 / NCIMB 9240 / NCTC 8049)).